A 1940-amino-acid polypeptide reads, in one-letter code: Myosin-3 (1940 aa).

A Myosin N-terminal SH3-like domain is found at 33–82 (DAKTYCFVVDSKEEYAKGKIKSSQDGKVTVETEDNRTLVVKPEDVYAMNP). One can recognise a Myosin motor domain in the interval 86 to 779 (DRIEDMAMLT…LLGTLEEMRD (694 aa)). Position 130 is an N6,N6,N6-trimethyllysine (Lys-130). Position 179–186 (179–186 (GESGAGKT)) interacts with ATP. 2 actin-binding regions span residues 656-678 (LNKLMSNLRTTHPHFVRCIIPNE) and 758-772 (KFGHTKVFFKAGLLG). The 30-residue stretch at 782–811 (LAKLITRTQAVCRGFLMRVEFQKMVQRRES) folds into the IQ domain. Residues 840-1933 (LLKSAETEKE…KTRDFTSSRM (1094 aa)) adopt a coiled-coil conformation.

This sequence belongs to the TRAFAC class myosin-kinesin ATPase superfamily. Myosin family. In terms of assembly, muscle myosin is a hexameric protein that consists of 2 heavy chain subunits (MHC), 2 alkali light chain subunits (MLC) and 2 regulatory light chain subunits (MLC-2). As to expression, expressed in fetal bone, thymus, placenta, heart, brain, and liver.

It is found in the cytoplasm. The protein resides in the myofibril. In terms of biological role, muscle contraction. The sequence is that of Myosin-3 (MYH3) from Homo sapiens (Human).